A 363-amino-acid polypeptide reads, in one-letter code: Transcriptional regulator AacuR (363 aa).

The interval 1–24 (MTSLQCPPPDRTRRSLSPTGPKFR) is disordered. A DNA-binding region (zn(2)-C6 fungal-type) is located at residues 27 to 54 (CKSCAASKIRCTKEKPQCARCVKRNMVC). Over residues 63–72 (RRKPGARLKH) the composition is skewed to basic residues. Residues 63-104 (RRKPGARLKHRESITTNAHHSPTTTTITTSRTTSSSPSASPK) are disordered. Low complexity predominate over residues 76 to 102 (ITTNAHHSPTTTTITTSRTTSSSPSAS).

Its subcellular location is the nucleus. Transcriptional regulator; part of the gene cluster that mediates the biosynthesis of the tetrahydroxanthone dimer secalonic acid D. This Aspergillus aculeatus (strain ATCC 16872 / CBS 172.66 / WB 5094) protein is Transcriptional regulator AacuR.